The chain runs to 353 residues: MSILFDSNETIYPFPPKPRPLSAEAKQHYRSRIKTLLRERNAVMVAHYYTDPEIQALAEETGGCVADSLEMARFGSTHSASTLLVAGVRFMGETAKILNPEKTILMPTLEAECSLDLGCPVDEFSRFCDEHPDRMVVVYANTSAAVKARADWVVTSSIAVELIEHLDSLGEKIIWAPDRHLGSYVQKQTGADVLCWQGACIVHDEFKTQALKRMKILYPDAAILVHPESPQSVVEMADAVGSTSQLIQAAKTLPQRELIVATDRGIFYKMQQACPEKTLLEAPTAGEGATCRSCAHCPWMAMNGLEAIANGLEQGGRAHEIHVDAALREGALIPLNRMLDFAASLKLRVKGNA.

2 residues coordinate iminosuccinate: H47 and S68. Residue C113 coordinates [4Fe-4S] cluster. Iminosuccinate is bound by residues Y139 to N141 and S156. Residue C200 coordinates [4Fe-4S] cluster. Iminosuccinate is bound by residues H226–E228 and T243. A [4Fe-4S] cluster-binding site is contributed by C297.

It belongs to the quinolinate synthase family. Type 1 subfamily. It depends on [4Fe-4S] cluster as a cofactor.

The protein resides in the cytoplasm. It catalyses the reaction iminosuccinate + dihydroxyacetone phosphate = quinolinate + phosphate + 2 H2O + H(+). It functions in the pathway cofactor biosynthesis; NAD(+) biosynthesis; quinolinate from iminoaspartate: step 1/1. Its function is as follows. Catalyzes the condensation of iminoaspartate with dihydroxyacetone phosphate to form quinolinate. The polypeptide is Quinolinate synthase (Pectobacterium carotovorum subsp. carotovorum (strain PC1)).